The following is a 226-amino-acid chain: Uracil-DNA glycosylase (226 aa).

The active-site Proton acceptor is the Asp64.

This sequence belongs to the uracil-DNA glycosylase (UDG) superfamily. UNG family.

Its subcellular location is the cytoplasm. It carries out the reaction Hydrolyzes single-stranded DNA or mismatched double-stranded DNA and polynucleotides, releasing free uracil.. Functionally, excises uracil residues from the DNA which can arise as a result of misincorporation of dUMP residues by DNA polymerase or due to deamination of cytosine. The protein is Uracil-DNA glycosylase of Vibrio campbellii (strain ATCC BAA-1116).